Consider the following 118-residue polypeptide: Inner membrane protein YhaI (118 aa).

The Periplasmic portion of the chain corresponds to 1-25 (MQWYLSVLKNYVGFSGRARRKEYWM). The chain crosses the membrane as a helical span at residues 26–46 (FTLINAIVGAIINVIQLILGL). A topological domain (cytoplasmic) is located at residue Glu47. A helical transmembrane segment spans residues 48 to 68 (LPYLSMLYLLATFLPVLALAI). Topologically, residues 69 to 77 (RRLHDTDRS) are periplasmic. Residues 78–98 (GAWALLFFVPFIGWLVLLVFF) form a helical membrane-spanning segment. Residues 99–118 (CTEGTSGSNRYGNDPKFGSN) are Cytoplasmic-facing.

To E.coli YhaH.

It is found in the cell inner membrane. This Escherichia coli O157:H7 protein is Inner membrane protein YhaI (yhaI).